Consider the following 70-residue polypeptide: Phycobilisome 8.1 kDa linker polypeptide, phycocyanin-associated, rod (70 aa).

Residues 5 to 63 enclose the CpcD-like domain; sequence SRSFQVEVSGLHQNEVTNQNNYPIRSSGSVFITIPFSRFNEELQRINRLGGKIVNIQPL.

Belongs to the phycobilisome linker protein family.

Its subcellular location is the cellular thylakoid membrane. Functionally, rod linker protein, associated with phycocyanin. Linker polypeptides determine the state of aggregation and the location of the disk-shaped phycobiliprotein units within the phycobilisome and modulate their spectroscopic properties in order to mediate a directed and optimal energy transfer. This Microchaete diplosiphon (Fremyella diplosiphon) protein is Phycobilisome 8.1 kDa linker polypeptide, phycocyanin-associated, rod (cpcD3).